The following is a 269-amino-acid chain: 4-hydroxy-tetrahydrodipicolinate reductase (269 aa).

11–16 (GPIGRM) contributes to the NAD(+) binding site. An NADP(+)-binding site is contributed by Lys-39. NAD(+)-binding positions include 101–103 (GTT) and 125–128 (ASNF). His-158 functions as the Proton donor/acceptor in the catalytic mechanism. His-159 is a (S)-2,3,4,5-tetrahydrodipicolinate binding site. The Proton donor role is filled by Lys-162. 168 to 169 (GT) is a (S)-2,3,4,5-tetrahydrodipicolinate binding site.

This sequence belongs to the DapB family. In terms of assembly, homotetramer.

Its subcellular location is the cytoplasm. It catalyses the reaction (S)-2,3,4,5-tetrahydrodipicolinate + NAD(+) + H2O = (2S,4S)-4-hydroxy-2,3,4,5-tetrahydrodipicolinate + NADH + H(+). The catalysed reaction is (S)-2,3,4,5-tetrahydrodipicolinate + NADP(+) + H2O = (2S,4S)-4-hydroxy-2,3,4,5-tetrahydrodipicolinate + NADPH + H(+). The protein operates within amino-acid biosynthesis; L-lysine biosynthesis via DAP pathway; (S)-tetrahydrodipicolinate from L-aspartate: step 4/4. Its function is as follows. Catalyzes the conversion of 4-hydroxy-tetrahydrodipicolinate (HTPA) to tetrahydrodipicolinate. This chain is 4-hydroxy-tetrahydrodipicolinate reductase, found in Buchnera aphidicola subsp. Acyrthosiphon pisum (strain Tuc7).